Reading from the N-terminus, the 195-residue chain is dCTP deaminase (195 aa).

Residues 105-110 (RSSLGR), Asp-123, 131-133 (TLE), Gln-152, Tyr-166, Lys-173, and Gln-177 each bind dCTP. Glu-133 functions as the Proton donor/acceptor in the catalytic mechanism. The disordered stretch occupies residues 159–195 (KSPAERPYGAERGSKYQGQTGPQASRIQGDREFGGDQ). Residues 160–172 (SPAERPYGAERGS) are compositionally biased toward basic and acidic residues. A compositionally biased stretch (polar residues) spans 174 to 184 (YQGQTGPQASR). A compositionally biased stretch (basic and acidic residues) spans 186-195 (QGDREFGGDQ).

It belongs to the dCTP deaminase family. Homotrimer.

It carries out the reaction dCTP + H2O + H(+) = dUTP + NH4(+). The protein operates within pyrimidine metabolism; dUMP biosynthesis; dUMP from dCTP (dUTP route): step 1/2. Functionally, catalyzes the deamination of dCTP to dUTP. The polypeptide is dCTP deaminase (Natronomonas pharaonis (strain ATCC 35678 / DSM 2160 / CIP 103997 / JCM 8858 / NBRC 14720 / NCIMB 2260 / Gabara) (Halobacterium pharaonis)).